The chain runs to 506 residues: Maturase K (506 aa).

Belongs to the intron maturase 2 family. MatK subfamily.

Its subcellular location is the plastid. It localises to the chloroplast. In terms of biological role, usually encoded in the trnK tRNA gene intron. Probably assists in splicing its own and other chloroplast group II introns. In Lathyrus aphaca (Yellow vetchling), this protein is Maturase K.